A 288-amino-acid chain; its full sequence is ATP synthase gamma chain (288 aa).

It belongs to the ATPase gamma chain family. F-type ATPases have 2 components, CF(1) - the catalytic core - and CF(0) - the membrane proton channel. CF(1) has five subunits: alpha(3), beta(3), gamma(1), delta(1), epsilon(1). CF(0) has three main subunits: a, b and c.

The protein resides in the cell inner membrane. Functionally, produces ATP from ADP in the presence of a proton gradient across the membrane. The gamma chain is believed to be important in regulating ATPase activity and the flow of protons through the CF(0) complex. In Aliivibrio fischeri (strain ATCC 700601 / ES114) (Vibrio fischeri), this protein is ATP synthase gamma chain.